The following is a 137-amino-acid chain: Large ribosomal subunit protein uL16 (137 aa).

This sequence belongs to the universal ribosomal protein uL16 family. As to quaternary structure, part of the 50S ribosomal subunit.

Its function is as follows. Binds 23S rRNA and is also seen to make contacts with the A and possibly P site tRNAs. In Leptospira biflexa serovar Patoc (strain Patoc 1 / Ames), this protein is Large ribosomal subunit protein uL16.